Reading from the N-terminus, the 252-residue chain is Maintenance of carboxysome distribution protein A (252 aa).

ATP is bound by residues Gly-11, Gly-12, Gly-14, Lys-15, Thr-16, Thr-17, Gln-41, Glu-147, Lys-151, Phe-182, Arg-183, Leu-216, Glu-217, and Ser-218. A Mg(2+)-binding site is contributed by Thr-16.

The protein belongs to the ParA family. McdA subfamily. Self-associates (probably a homodimer), interacts with McdB probably via the C-terminus of both proteins. Shows no signs of filament formation. Homodimerizes in the presence of ATP, making extra nucleotide contacts than with ADP or AMP-PNP. Each subunit binds 1 ATP molecule; Glu-147, Lys-151 and Arg-183 cross the dimer interface to contact ATP in the other subunit, while Phe-182, Arg-183 and Phe-221 stack with the adenine base in their own subunit.

It is found in the cytoplasm. Its subcellular location is the nucleoid. The enzyme catalyses ATP + H2O = ADP + phosphate + H(+). Functionally, mcdA and McdB together mediate carboxysome (Cb) spacing, size, ultrastructure and probably inheritance in the cell. Together they prevent Cb aggregation. McdA is an ATPase that forms dynamic gradients on the nucleoid in response to adapter protein McdB, which associates with carboxysomes. The interplay between McdA gradients on the nucleoid and McdB-bound carboxysomes result in the equal spacing of Cbs along the cell length. Binds nucleoid DNA in an ATP-dependent manner; neither ADP nor ATP-gamma-S support DNA binding. Upon ATP-binding dimerizes and binds nucleoid DNA; the (McdA-ATP)2 dimer transiently binds McdB-bound Cbs. McdA's ATPase activity is stimulated 2-fold by DNA and McdB; ATP hydrolysis causes McdA release from DNA. Overexpression leads to loss of McdA oscillation, diffuse nucleoid staining by McdA with formation of large carboxysome aggregates that are in regions depleted of McdA; McdA remains nucleoid-associated. In terms of biological role, mutagenesis studies (characterized in vivo) suggest ATP binding, protein dimerization and a conformational change are necessary for nucleoid DNA-binding and binding to McdB-bound Cbs, which tethers Cbs to the nucleoid. Eventual McdB-stimulated ATP hydrolysis causes de-dimerization of McdA which no longer binds the nucleoid and releases McdB and Cbs. McdB-bound Cbs then move to a region of higher McdA concentration, distributing Cbs across the nucleoid. Incorrect positioning (aggregation) of carboxysomes results in reduced CO(2) fixation by encapsulated ribulose-1,5-bisphosphate carboxylase (RuBisCO, cbbL/cbbS), which leads to slower growth, cell elongation, asymmetric cell division and an increase in RuBisCO levels. The protein is Maintenance of carboxysome distribution protein A of Synechococcus elongatus (strain ATCC 33912 / PCC 7942 / FACHB-805) (Anacystis nidulans R2).